We begin with the raw amino-acid sequence, 827 residues long: Glycerol-3-phosphate acyltransferase (827 aa).

The HXXXXD motif signature appears at 325–330; the sequence is CHRSHM.

This sequence belongs to the GPAT/DAPAT family.

The protein resides in the cell inner membrane. The catalysed reaction is sn-glycerol 3-phosphate + an acyl-CoA = a 1-acyl-sn-glycero-3-phosphate + CoA. The protein operates within phospholipid metabolism; CDP-diacylglycerol biosynthesis; CDP-diacylglycerol from sn-glycerol 3-phosphate: step 1/3. This Shigella dysenteriae serotype 1 (strain Sd197) protein is Glycerol-3-phosphate acyltransferase.